Reading from the N-terminus, the 77-residue chain is Small ribosomal subunit protein bS16c (77 aa).

This sequence belongs to the bacterial ribosomal protein bS16 family.

Its subcellular location is the plastid. The protein resides in the cyanelle. This is Small ribosomal subunit protein bS16c from Cyanophora paradoxa.